A 172-amino-acid polypeptide reads, in one-letter code: MTTLSNLSVDLVGEIFSRVPLISLSEVRCTCTTWNTLSWNILSENYVFGKADTSKQFLGFVVMNSKVCSLRLDLQGIHNNDFVDPSLKEINIVDQYDISNIFHCDGLLLCVRWIQPRSKYHKFHRLDMYAFGYDKQQQEPDEETVTLSCIRDEQLAVLYQPYDLCLDLFMEI.

The F-box domain occupies 1 to 51; the sequence is MTTLSNLSVDLVGEIFSRVPLISLSEVRCTCTTWNTLSWNILSENYVFGKA.

This Arabidopsis thaliana (Mouse-ear cress) protein is Putative F-box protein At3g13825.